The chain runs to 203 residues: Cell division protein SepF (203 aa).

2 disordered regions span residues 26 to 51 and 167 to 203; these read DGEL…RRGQ and GTAS…WRNQ. Composition is skewed to basic and acidic residues over residues 39–50 and 183–203; these read EPPRRSAPERRG and RRSE…WRNQ.

The protein belongs to the SepF family. In terms of assembly, homodimer. Interacts with FtsZ.

Its subcellular location is the cytoplasm. Its function is as follows. Cell division protein that is part of the divisome complex and is recruited early to the Z-ring. Probably stimulates Z-ring formation, perhaps through the cross-linking of FtsZ protofilaments. Its function overlaps with FtsA. In Symbiobacterium thermophilum (strain DSM 24528 / JCM 14929 / IAM 14863 / T), this protein is Cell division protein SepF.